The chain runs to 209 residues: Large ribosomal subunit protein uL3 (209 aa).

The interval 117–142 (FQGPIKRHGQSRGPETHGSRYHRRPG) is disordered.

This sequence belongs to the universal ribosomal protein uL3 family. Part of the 50S ribosomal subunit. Forms a cluster with proteins L14 and L19.

Functionally, one of the primary rRNA binding proteins, it binds directly near the 3'-end of the 23S rRNA, where it nucleates assembly of the 50S subunit. In Clostridioides difficile (strain 630) (Peptoclostridium difficile), this protein is Large ribosomal subunit protein uL3.